The sequence spans 394 residues: Elongation factor Tu (394 aa).

In terms of domain architecture, tr-type G spans 10–204 (KPHVNVGTIG…ALDTYIPEPE (195 aa)). The tract at residues 19-26 (GHVDHGKT) is G1. Residue 19 to 26 (GHVDHGKT) participates in GTP binding. T26 is a binding site for Mg(2+). A G2 region spans residues 60-64 (GITIN). The tract at residues 81–84 (DCPG) is G3. GTP-binding positions include 81–85 (DCPGH) and 136–139 (NKCD). Positions 136 to 139 (NKCD) are G4. Residues 174-176 (SAL) form a G5 region.

Belongs to the TRAFAC class translation factor GTPase superfamily. Classic translation factor GTPase family. EF-Tu/EF-1A subfamily. In terms of assembly, monomer.

The protein resides in the cytoplasm. It catalyses the reaction GTP + H2O = GDP + phosphate + H(+). Functionally, GTP hydrolase that promotes the GTP-dependent binding of aminoacyl-tRNA to the A-site of ribosomes during protein biosynthesis. This Shewanella pealeana (strain ATCC 700345 / ANG-SQ1) protein is Elongation factor Tu.